The sequence spans 117 residues: Large ribosomal subunit protein uL18 (117 aa).

The protein belongs to the universal ribosomal protein uL18 family. Part of the 50S ribosomal subunit; part of the 5S rRNA/L5/L18/L25 subcomplex. Contacts the 5S and 23S rRNAs.

This is one of the proteins that bind and probably mediate the attachment of the 5S RNA into the large ribosomal subunit, where it forms part of the central protuberance. This Mycoplasma mobile (strain ATCC 43663 / 163K / NCTC 11711) (Mesomycoplasma mobile) protein is Large ribosomal subunit protein uL18.